We begin with the raw amino-acid sequence, 709 residues long: Polyribonucleotide nucleotidyltransferase (709 aa).

Positions 486 and 492 each coordinate Mg(2+). The KH domain occupies 553 to 612 (PRIHTIKINPDKIKDVIGKGGSVIRALTEETGTTIEIEDDGTVKIAATDGEKAKHAISRI). The 69-residue stretch at 622–690 (ARIYTGKVTR…RQGRVRLSIK (69 aa)) folds into the S1 motif domain.

This sequence belongs to the polyribonucleotide nucleotidyltransferase family. As to quaternary structure, component of the RNA degradosome, which is a multiprotein complex involved in RNA processing and mRNA degradation. Requires Mg(2+) as cofactor.

The protein localises to the cytoplasm. The catalysed reaction is RNA(n+1) + phosphate = RNA(n) + a ribonucleoside 5'-diphosphate. Its function is as follows. Involved in mRNA degradation. Catalyzes the phosphorolysis of single-stranded polyribonucleotides processively in the 3'- to 5'-direction. This Photorhabdus laumondii subsp. laumondii (strain DSM 15139 / CIP 105565 / TT01) (Photorhabdus luminescens subsp. laumondii) protein is Polyribonucleotide nucleotidyltransferase.